The primary structure comprises 242 residues: Probable transcriptional regulatory protein HEAR0561 (242 aa).

Belongs to the TACO1 family.

The protein resides in the cytoplasm. This Herminiimonas arsenicoxydans protein is Probable transcriptional regulatory protein HEAR0561.